The following is a 435-amino-acid chain: Histidine--tRNA ligase (435 aa).

It belongs to the class-II aminoacyl-tRNA synthetase family.

The protein localises to the cytoplasm. It carries out the reaction tRNA(His) + L-histidine + ATP = L-histidyl-tRNA(His) + AMP + diphosphate + H(+). This chain is Histidine--tRNA ligase (hisS), found in Aeropyrum pernix (strain ATCC 700893 / DSM 11879 / JCM 9820 / NBRC 100138 / K1).